The following is a 43-amino-acid chain: Protein PsbN (43 aa).

The helical transmembrane segment at 5–27 threads the bilayer; it reads TLVAISISGLLVSFTGYALYTAF.

It belongs to the PsbN family.

The protein resides in the plastid. Its subcellular location is the chloroplast thylakoid membrane. May play a role in photosystem I and II biogenesis. The chain is Protein PsbN from Houttuynia cordata (Chameleon plant).